The sequence spans 159 residues: Ribosomal RNA large subunit methyltransferase H (159 aa).

Residues leucine 76, glycine 108, and 127-132 each bind S-adenosyl-L-methionine; that span reads FSRMTF.

The protein belongs to the RNA methyltransferase RlmH family. As to quaternary structure, homodimer.

The protein localises to the cytoplasm. It carries out the reaction pseudouridine(1915) in 23S rRNA + S-adenosyl-L-methionine = N(3)-methylpseudouridine(1915) in 23S rRNA + S-adenosyl-L-homocysteine + H(+). Specifically methylates the pseudouridine at position 1915 (m3Psi1915) in 23S rRNA. This chain is Ribosomal RNA large subunit methyltransferase H, found in Clostridioides difficile (strain 630) (Peptoclostridium difficile).